The primary structure comprises 234 residues: Chalcone--flavanone isomerase 1 (234 aa).

The substrate site is built by Thr-50, Asn-115, and Ser-192.

It belongs to the chalcone isomerase family.

It catalyses the reaction a chalcone = a flavanone.. The protein operates within secondary metabolite biosynthesis; flavonoid biosynthesis. Functionally, catalyzes the intramolecular cyclization of bicyclic chalcones into tricyclic (S)-flavanones. Responsible for the isomerization of 4,2',4',6'-tetrahydroxychalcone (also termed chalcone) into naringenin. The protein is Chalcone--flavanone isomerase 1 (CHI1) of Vitis vinifera (Grape).